Reading from the N-terminus, the 150-residue chain is Urease accessory protein UreE (150 aa).

Belongs to the UreE family.

It localises to the cytoplasm. Its function is as follows. Involved in urease metallocenter assembly. Binds nickel. Probably functions as a nickel donor during metallocenter assembly. The protein is Urease accessory protein UreE of Parasynechococcus marenigrum (strain WH8102).